Here is a 417-residue protein sequence, read N- to C-terminus: Senescence-associated protein AAF, chloroplastic (417 aa).

The transit peptide at 1 to 36 (MALNVSKVVPNSPILVKSVNASRSRRVLLAYVHHPL) directs the protein to the chloroplast.

It belongs to the ATA15/OSA15 family. Expressed in leaves. Expressed in 7-day-old seedlings, roots, rosette leaves, cauline leaves and flower buds.

Its subcellular location is the plastid. The protein resides in the chloroplast. Its function is as follows. Involved in modulation of redox homeostasis to regulate leaf senescence mediated by age and stress factors during plant development. Its function is dependent of EIN2, a central factor of ethylene signaling. In Arabidopsis thaliana (Mouse-ear cress), this protein is Senescence-associated protein AAF, chloroplastic.